The primary structure comprises 692 residues: Junctophilin-2 (692 aa).

Over 1–670 the chain is Cytoplasmic; it reads MSGGRFDFDD…EVEVEEVPNT (670 aa). 6 MORN repeats span residues 14–36, 38–59, 60–79, 82–104, 106–128, and 129–151; these read YCGG…KGQG, YSGS…SGNT, FEGY…TKGR, YKGE…NSGA, YEGT…DGGT, and YQGQ…PYGM. Phosphoserine occurs at positions 162 and 165. Disordered regions lie at residues 164 to 190 and 246 to 273; these read SSLR…LPLP and LSSG…AAPF. MORN repeat units follow at residues 285–307 and 308–330; these read YMGE…SGLR and YEGE…DGHR. The Bipartite nuclear localization signal signature appears at 345–359; that stretch reads KRRVLPLKSNKVRQK. The segment at 439-661 is disordered; it reads NSESLLEPRE…KEVAQEAEAE (223 aa). A phosphoserine mark is found at serine 440, serine 442, and serine 462. Over residues 457–471 the composition is skewed to basic and acidic residues; that stretch reads ERPRESPQLHERETP. Position 470 is a phosphothreonine (threonine 470). Residues 474 to 487 are compositionally biased toward pro residues; it reads EGGPPSPAGTPPQP. Residue serine 479 is modified to Phosphoserine. Threonine 483 is modified (phosphothreonine). The Nuclear localization signal motif lies at 488 to 492; that stretch reads KRPRP. A phosphoserine mark is found at serine 527 and serine 533. Residues 573–582 show a composition bias toward acidic residues; sequence PLEDEPEPEP. Phosphoserine is present on residues serine 589, serine 593, serine 604, and serine 609. Residues 627 to 640 show a composition bias toward basic and acidic residues; sequence AEPKAKARKTEARG. The chain crosses the membrane as a helical; Anchor for type IV membrane protein span at residues 671-691; sequence VLICMVILLNIGLAILFVHLL.

Belongs to the junctophilin family. In terms of assembly, interacts with TRPC3. Interacts with BAG5 and HSPA8; the interaction with HSPA8 is increased in the presence of BAG5. Junctophilin-2 N-terminal fragment: Interacts with MEF2C. In terms of processing, proteolytically cleaved by calpain in response to cardiac stress. The major cleavage site takes place at the C-terminus and leads to the release of the Junctophilin-2 N-terminal fragment chain (JP2NT). Post-translationally, phosphorylation on Ser-165, probably by PKC, affects RYR1-mediated calcium ion release, interaction with TRPC3, and skeletal muscle myotubule development.

The protein resides in the cell membrane. Its subcellular location is the sarcoplasmic reticulum membrane. It is found in the endoplasmic reticulum membrane. It localises to the nucleus. In terms of biological role, membrane-binding protein that provides a structural bridge between the plasma membrane and the sarcoplasmic reticulum and is required for normal excitation-contraction coupling in cardiomyocytes. Provides a structural foundation for functional cross-talk between the cell surface and intracellular Ca(2+) release channels by maintaining the 12-15 nm gap between the sarcolemma and the sarcoplasmic reticulum membranes in the cardiac dyads. Necessary for proper intracellular Ca(2+) signaling in cardiac myocytes via its involvement in ryanodine receptor-mediated calcium ion release. Contributes to the construction of skeletal muscle triad junctions. Transcription repressor required to safeguard against the deleterious effects of cardiac stress. Generated following cleavage of the Junctophilin-2 chain by calpain in response to cardiac stress in cardiomyocytes. Following cleavage and release from the membrane, translocates to the nucleus, binds DNA and represses expression of genes implicated in cell growth and differentiation, hypertrophy, inflammation and fibrosis. Modifies the transcription profile and thereby attenuates pathological remodeling in response to cardiac stress. Probably acts by competing with MEF2 transcription factors and TATA-binding proteins. This Rattus norvegicus (Rat) protein is Junctophilin-2.